The sequence spans 420 residues: Phosphoribosylamine--glycine ligase (420 aa).

Positions 108 to 314 (KEIMVKYGVS…FAQNITDILD (207 aa)) constitute an ATP-grasp domain. 134–195 (IEKHGAPIVV…EEFLEGEEFS (62 aa)) contacts ATP. Mg(2+) is bound by residues E284 and N286.

This sequence belongs to the GARS family. The cofactor is Mg(2+). It depends on Mn(2+) as a cofactor.

The enzyme catalyses 5-phospho-beta-D-ribosylamine + glycine + ATP = N(1)-(5-phospho-beta-D-ribosyl)glycinamide + ADP + phosphate + H(+). It participates in purine metabolism; IMP biosynthesis via de novo pathway; N(1)-(5-phospho-D-ribosyl)glycinamide from 5-phospho-alpha-D-ribose 1-diphosphate: step 2/2. The chain is Phosphoribosylamine--glycine ligase from Streptococcus pneumoniae (strain ATCC BAA-255 / R6).